The primary structure comprises 137 residues: Fluoride-specific ion channel FluC 2 (137 aa).

Helical transmembrane passes span 3–23 (MGGS…SVLG), 44–64 (WGTM…GALA), 76–96 (PWLF…SFSL), and 111–131 (LGNV…GFLL). The Na(+) site is built by glycine 86 and threonine 89.

Belongs to the fluoride channel Fluc/FEX (TC 1.A.43) family.

The protein resides in the cell inner membrane. It catalyses the reaction fluoride(in) = fluoride(out). Its activity is regulated as follows. Na(+) is not transported, but it plays an essential structural role and its presence is essential for fluoride channel function. Its function is as follows. Fluoride-specific ion channel. Important for reducing fluoride concentration in the cell, thus reducing its toxicity. The chain is Fluoride-specific ion channel FluC 2 from Bradyrhizobium diazoefficiens (strain JCM 10833 / BCRC 13528 / IAM 13628 / NBRC 14792 / USDA 110).